A 232-amino-acid chain; its full sequence is Dephospho-CoA kinase (232 aa).

One can recognise a DPCK domain in the interval 3 to 206; that stretch reads IVGLTGGIAS…RPLTWIEFWR (204 aa). 8–15 provides a ligand contact to ATP; the sequence is GGIASGKS.

It belongs to the CoaE family.

Its subcellular location is the peroxisome. It carries out the reaction 3'-dephospho-CoA + ATP = ADP + CoA + H(+). Its pathway is cofactor biosynthesis; coenzyme A biosynthesis; CoA from (R)-pantothenate: step 5/5. Functionally, catalyzes the phosphorylation of the 3'-hydroxyl group of dephosphocoenzyme A to form coenzyme A. The polypeptide is Dephospho-CoA kinase (Arabidopsis thaliana (Mouse-ear cress)).